The sequence spans 327 residues: ATPase ASNA1 homolog (327 aa).

Residue 26 to 33 (KGGVGKTT) coordinates ATP. The active site involves Asp-57. 2 residues coordinate ATP: Glu-238 and Asn-265. Zn(2+) is bound by residues Cys-274 and Cys-277.

Belongs to the arsA ATPase family. As to quaternary structure, homodimer.

Its subcellular location is the cytoplasm. The protein resides in the endoplasmic reticulum. Its function is as follows. ATPase required for the post-translational delivery of tail-anchored (TA) proteins to the endoplasmic reticulum. Recognizes and selectively binds the transmembrane domain of TA proteins in the cytosol. This complex then targets to the endoplasmic reticulum by membrane-bound receptors, where the tail-anchored protein is released for insertion. This process is regulated by ATP binding and hydrolysis. ATP binding drives the homodimer towards the closed dimer state, facilitating recognition of newly synthesized TA membrane proteins. ATP hydrolysis is required for insertion. Subsequently, the homodimer reverts towards the open dimer state, lowering its affinity for the membrane-bound receptor, and returning it to the cytosol to initiate a new round of targeting. The chain is ATPase ASNA1 homolog from Entamoeba dispar (strain ATCC PRA-260 / SAW760).